The chain runs to 217 residues: LSM12 homolog A (217 aa).

The region spanning Val-9–Cys-78 is the Sm domain. The AD domain maps to Gln-86–Pro-184. Positions Ser-185–Asn-217 are disordered. Over residues Ser-190 to Asn-217 the composition is skewed to low complexity.

It belongs to the LSM12 family. As to quaternary structure, component of the Atx2-tyf activator complex, composed of Atx2, tyf, pAbp, Lsm12a. Interacts with tyf, Atx2 and pAbp.

In terms of biological role, component of the Atx2-tyf activator complex which functions in the circadian pacemaker neurons to activate the TYF-dependent translation of per and maintain 24 hour periodicity in circadian behaviors. Within the Atx2-tyf complex, likely to function as a molecular adapter which stabilizes the interaction between Atx2 and the translational regulator tyf. The polypeptide is LSM12 homolog A (Drosophila melanogaster (Fruit fly)).